Here is a 65-residue protein sequence, read N- to C-terminus: Beta-mammal toxin Tpa2 (65 aa).

Residues 2-64 (KEGYLVGNDG…TWSRATNRCG (63 aa)) form the LCN-type CS-alpha/beta domain. Cystine bridges form between cysteine 12–cysteine 63, cysteine 16–cysteine 38, cysteine 24–cysteine 44, and cysteine 28–cysteine 46.

In terms of tissue distribution, expressed by the venom gland.

Its subcellular location is the secreted. Functionally, beta toxins bind voltage-independently at site-4 of sodium channels (Nav) and shift the voltage of activation toward more negative potentials thereby affecting sodium channel activation and promoting spontaneous and repetitive firing. This toxin is lethal to mice. The sequence is that of Beta-mammal toxin Tpa2 from Tityus pachyurus (Colombian scorpion).